A 285-amino-acid polypeptide reads, in one-letter code: 4-hydroxybenzoate octaprenyltransferase (285 aa).

7 helical membrane passes run 17–37, 41–61, 92–112, 135–155, 158–178, 216–236, and 263–283; these read PVGI…AGAG, PKVL…GCVI, LLLF…LNPL, HWPQ…AFAA, GTVP…ATVY, ALLL…YYYL, and AFLN…LHYL.

Belongs to the UbiA prenyltransferase family. Mg(2+) is required as a cofactor.

Its subcellular location is the cell inner membrane. The enzyme catalyses all-trans-octaprenyl diphosphate + 4-hydroxybenzoate = 4-hydroxy-3-(all-trans-octaprenyl)benzoate + diphosphate. It functions in the pathway cofactor biosynthesis; ubiquinone biosynthesis. Its function is as follows. Catalyzes the prenylation of para-hydroxybenzoate (PHB) with an all-trans polyprenyl group. Mediates the second step in the final reaction sequence of ubiquinone-8 (UQ-8) biosynthesis, which is the condensation of the polyisoprenoid side chain with PHB, generating the first membrane-bound Q intermediate 3-octaprenyl-4-hydroxybenzoate. This is 4-hydroxybenzoate octaprenyltransferase from Nitrosococcus oceani (strain ATCC 19707 / BCRC 17464 / JCM 30415 / NCIMB 11848 / C-107).